Reading from the N-terminus, the 78-residue chain is Small ribosomal subunit protein bS18 (78 aa).

Belongs to the bacterial ribosomal protein bS18 family. In terms of assembly, part of the 30S ribosomal subunit. Forms a tight heterodimer with protein bS6.

Functionally, binds as a heterodimer with protein bS6 to the central domain of the 16S rRNA, where it helps stabilize the platform of the 30S subunit. This Limosilactobacillus reuteri (strain DSM 20016) (Lactobacillus reuteri) protein is Small ribosomal subunit protein bS18.